The sequence spans 2260 residues: Reducing polyketide synthase pksF (2260 aa).

Positions 20–445 constitute a Ketosynthase family 3 (KS3) domain; that stretch reads VEPIAIVGFG…GTNAHVVLDD (426 aa). Active-site for beta-ketoacyl synthase activity residues include C194, H329, and H368. The interval 598–933 is malonyl-CoA:ACP transacylase (MAT) domain; that stretch reads FVFTGQGAQW…ECAGKLHTIG (336 aa). The For malonyltransferase activity role is filled by S689. Residues 984–1121 are N-terminal hotdog fold; it reads HELLGSRTPD…GYVAIEYDDR (138 aa). A dehydratase (DH) domain region spans residues 984 to 1281; it reads HELLGSRTPD…FRNKLFSITA (298 aa). A PKS/mFAS DH domain is found at 984–1306; sequence HELLGSRTPD…TSTIGRNSPS (323 aa). H1016 acts as the Proton acceptor; for dehydratase activity in catalysis. Positions 1150-1306 are C-terminal hotdog fold; that stretch reads RIAIDSADIY…TSTIGRNSPS (157 aa). The Proton donor; for dehydratase activity role is filled by D1216. The tract at residues 1544–1859 is enoylreductase (ER) domain; the sequence is GILKTLHYEQ…DVDVVEKIVI (316 aa). The tract at residues 1882–2104 is ketoreductase (KR) domain; it reads PDASYLIAGA…LRFCCDPDRV (223 aa). A Carrier domain is found at 2174-2251; it reads QATDIVVEAI…LLAVKVAGKS (78 aa). S2211 carries the post-translational modification O-(pantetheine 4'-phosphoryl)serine.

The cofactor is pantetheine 4'-phosphate.

Functionally, reducing polyketide synthase that catalyzes the formation of a C22 intermediate attached to the ACP. Release by intramolecular hydrolysis by the enolized delta-carbonyl would give the pyrone product aslanipyrone. Alternatively, KR-mediated reduction of the beta-carbonyl of the C22 intermediate would form a beta-hydroxy thioester intermediate, which could be a substrate for a further KS-mediated condensation of an additional C2 unit to form a C24 intermediate, which cyclizes by aldol condensation followed by decarboxylation to form aslaniol. Neither aslanipyrone, aslaniol, nor their derivatives have been detected in A.solani, probably due to a low abundance and/or extensive post-PKS modification. It is assumed that the branching point from C22 to C24 is the result of KR activity on the C22 intermediate anchored to the ACP. The sequence is that of Reducing polyketide synthase pksF from Alternaria solani.